Reading from the N-terminus, the 235-residue chain is MICOS complex subunit MIC25 (235 aa).

Glycine 2 carries N-myristoyl glycine lipidation. Serine 13 and serine 31 each carry phosphoserine. 2 disordered regions span residues 31–90 and 106–132; these read SENV…VKRY and KRER…HEEQ. Residues 129–176 are a coiled coil; the sequence is HEEQKSVRLARELESREAELRRRDTFYKEQLERIERKNAEMYKLSSEQ. The CHCH domain maps to 194 to 235; sequence EPVCSGLQAQILHCYRDRPHEVLLCSDLVKAYQRCVSAAHKG. Short sequence motifs (cx9C motif) lie at residues 197-207 and 218-228; these read CSGLQAQILHC and CSDLVKAYQRC. 2 disulfides stabilise this stretch: cysteine 197–cysteine 228 and cysteine 207–cysteine 218.

This sequence belongs to the MICOS complex subunit Mic19 family. Metazoan Mic25 subfamily. In terms of assembly, component of the mitochondrial contact site and cristae organizing system (MICOS) complex, composed of at least MICOS10/MIC10, CHCHD3/MIC19, CHCHD6/MIC25, APOOL/MIC27, IMMT/MIC60, APOO/MIC23/MIC26 and MICOS13/MIC13. This complex was also known under the names MINOS or MitOS complex. The MICOS complex associates with mitochondrial outer membrane proteins SAMM50, MTX1 and MTX2 (together described as components of the mitochondrial outer membrane sorting assembly machinery (SAM) complex) and DNAJC11, mitochondrial inner membrane protein TMEM11 and with HSPA9. The MICOS and SAM complexes together with DNAJC11 are part of a large protein complex spanning both membranes termed the mitochondrial intermembrane space bridging (MIB) complex. Interacts with DISC1. Interacts with DISC1. Interacts with IMMT/MIC60. As to quaternary structure, (Microbial infection) Interacts with human cytomegalovirus protein UL37 isoform vMIA; this interaction rewires mitochondria by engaging the conserved MICOS complex.

It is found in the mitochondrion inner membrane. The protein localises to the mitochondrion. Functionally, component of the MICOS complex, a large protein complex of the mitochondrial inner membrane that plays crucial roles in the maintenance of crista junctions, inner membrane architecture, and formation of contact sites to the outer membrane. The protein is MICOS complex subunit MIC25 (CHCHD6) of Homo sapiens (Human).